The following is a 148-amino-acid chain: Large ribosomal subunit protein bL9 (148 aa).

This sequence belongs to the bacterial ribosomal protein bL9 family.

Binds to the 23S rRNA. This is Large ribosomal subunit protein bL9 from Staphylococcus aureus (strain Newman).